A 75-amino-acid chain; its full sequence is UPF0270 protein PFLU_4323 (75 aa).

Belongs to the UPF0270 family.

This chain is UPF0270 protein PFLU_4323, found in Pseudomonas fluorescens (strain SBW25).